Here is a 226-residue protein sequence, read N- to C-terminus: Large ribosomal subunit protein uL1 (226 aa).

Belongs to the universal ribosomal protein uL1 family. As to quaternary structure, part of the 50S ribosomal subunit.

Its function is as follows. Binds directly to 23S rRNA. The L1 stalk is quite mobile in the ribosome, and is involved in E site tRNA release. Protein L1 is also a translational repressor protein, it controls the translation of the L11 operon by binding to its mRNA. The chain is Large ribosomal subunit protein uL1 from Mycoplasma pneumoniae (strain ATCC 29342 / M129 / Subtype 1) (Mycoplasmoides pneumoniae).